Reading from the N-terminus, the 302-residue chain is Segregation and condensation protein A (302 aa).

This sequence belongs to the ScpA family. Component of a cohesin-like complex composed of ScpA, ScpB and the Smc homodimer, in which ScpA and ScpB bind to the head domain of Smc. The presence of the three proteins is required for the association of the complex with DNA.

Its subcellular location is the cytoplasm. In terms of biological role, participates in chromosomal partition during cell division. May act via the formation of a condensin-like complex containing Smc and ScpB that pull DNA away from mid-cell into both cell halves. The chain is Segregation and condensation protein A from Xylella fastidiosa (strain Temecula1 / ATCC 700964).